The primary structure comprises 206 residues: Protein GrpE (206 aa).

It belongs to the GrpE family. In terms of assembly, homodimer.

The protein resides in the cytoplasm. Functionally, participates actively in the response to hyperosmotic and heat shock by preventing the aggregation of stress-denatured proteins, in association with DnaK and GrpE. It is the nucleotide exchange factor for DnaK and may function as a thermosensor. Unfolded proteins bind initially to DnaJ; upon interaction with the DnaJ-bound protein, DnaK hydrolyzes its bound ATP, resulting in the formation of a stable complex. GrpE releases ADP from DnaK; ATP binding to DnaK triggers the release of the substrate protein, thus completing the reaction cycle. Several rounds of ATP-dependent interactions between DnaJ, DnaK and GrpE are required for fully efficient folding. This chain is Protein GrpE, found in Psychromonas ingrahamii (strain DSM 17664 / CCUG 51855 / 37).